Reading from the N-terminus, the 326-residue chain is Olfactory receptor 11H2 (326 aa).

At Met-1–Ser-44 the chain is on the extracellular side. N-linked (GlcNAc...) asparagine glycans are attached at residues Asn-13 and Asn-18. The helical transmembrane segment at Leu-45 to Trp-65 threads the bilayer. Topologically, residues Cys-66 to Thr-72 are cytoplasmic. Residues Pro-73–Val-93 traverse the membrane as a helical segment. Topologically, residues Pro-94–Cys-112 are extracellular. A glycan (N-linked (GlcNAc...) asparagine) is linked at Asn-106. A disulfide bridge connects residues Cys-112 and Cys-194. The chain crosses the membrane as a helical span at residues Phe-113–Met-133. Over Ala-134–Lys-158 the chain is Cytoplasmic. A helical membrane pass occupies residues Leu-159–Ser-179. The Extracellular portion of the chain corresponds to Gln-180–Thr-216. Residues Leu-217–Leu-237 form a helical membrane-spanning segment. The Cytoplasmic portion of the chain corresponds to Lys-238–His-259. The chain crosses the membrane as a helical span at residues Leu-260 to Gly-280. The Extracellular segment spans residues His-281 to Lys-287. Residues Ile-288–Gln-308 traverse the membrane as a helical segment. At Asn-309–Ile-326 the chain is on the cytoplasmic side.

It belongs to the G-protein coupled receptor 1 family.

It localises to the cell membrane. Odorant receptor. In Homo sapiens (Human), this protein is Olfactory receptor 11H2 (OR11H2).